The primary structure comprises 142 residues: Large ribosomal subunit protein uL11 (142 aa).

Belongs to the universal ribosomal protein uL11 family. As to quaternary structure, part of the ribosomal stalk of the 50S ribosomal subunit. Interacts with L10 and the large rRNA to form the base of the stalk. L10 forms an elongated spine to which L12 dimers bind in a sequential fashion forming a multimeric L10(L12)X complex. In terms of processing, one or more lysine residues are methylated.

Functionally, forms part of the ribosomal stalk which helps the ribosome interact with GTP-bound translation factors. The sequence is that of Large ribosomal subunit protein uL11 from Desulfitobacterium hafniense (strain DSM 10664 / DCB-2).